Reading from the N-terminus, the 273-residue chain is DnaJ homolog subfamily C member 27 (273 aa).

The interval 1–18 (MESNVPKRKEPLKSLRIK) is required for interaction with MAPK1. Residues 23-30 (GNAEVGKS), 71-75 (DMAGH), and 134-137 (NKID) each bind GTP. Positions 217–273 (DSWEMLGVRPGASREEVNKAYRKLAVLLHPDKCVAPGSEDAFKAVVNARTALLKNIK) constitute a J domain.

It belongs to the small GTPase superfamily. Rab family. Interacts directly with MAPK1 (wild-type and kinase-deficient forms). Interacts directly (in GTP-bound form) with MAP2K1 (wild-type and kinase-deficient forms).

Its subcellular location is the nucleus. Functionally, GTPase which can activate the MEK/ERK pathway and induce cell transformation when overexpressed. May act as a nuclear scaffold for MAPK1, probably by association with MAPK1 nuclear export signal leading to enhanced ERK1/ERK2 signaling. This chain is DnaJ homolog subfamily C member 27 (Dnajc27), found in Rattus norvegicus (Rat).